Consider the following 231-residue polypeptide: Chromosome partition protein MukE (231 aa).

Positions 204-231 are disordered; sequence TPEPSQQSLLENPTAEYDEEQTEWEDEA. Residues 219–231 are compositionally biased toward acidic residues; sequence EYDEEQTEWEDEA.

This sequence belongs to the MukE family. As to quaternary structure, interacts, and probably forms a ternary complex, with MukF and MukB. The complex formation is stimulated by calcium or magnesium.

It is found in the cytoplasm. The protein localises to the nucleoid. Its function is as follows. Involved in chromosome condensation, segregation and cell cycle progression. May participate in facilitating chromosome segregation by condensation DNA from both sides of a centrally located replisome during cell division. Probably acts via its interaction with MukB and MukF. This Vibrio cholerae serotype O1 (strain ATCC 39315 / El Tor Inaba N16961) protein is Chromosome partition protein MukE.